Consider the following 301-residue polypeptide: Protoheme IX farnesyltransferase 1 (301 aa).

The next 9 membrane-spanning stretches (helical) occupy residues Val-29–Val-49, Val-51–Leu-71, Ala-101–Asn-121, Leu-123–Leu-143, Asn-150–Thr-170, Ala-177–Ile-197, Cys-223–Met-243, Cys-244–Trp-264, and Leu-274–Leu-294.

This sequence belongs to the UbiA prenyltransferase family. Protoheme IX farnesyltransferase subfamily.

It is found in the cell inner membrane. It catalyses the reaction heme b + (2E,6E)-farnesyl diphosphate + H2O = Fe(II)-heme o + diphosphate. Its pathway is porphyrin-containing compound metabolism; heme O biosynthesis; heme O from protoheme: step 1/1. In terms of biological role, converts heme B (protoheme IX) to heme O by substitution of the vinyl group on carbon 2 of heme B porphyrin ring with a hydroxyethyl farnesyl side group. This Shewanella baltica (strain OS195) protein is Protoheme IX farnesyltransferase 1.